The primary structure comprises 299 residues: Ethylmalonyl-CoA decarboxylase (299 aa).

An N6-acetyllysine; alternate modification is found at K209. K209 is subject to N6-succinyllysine; alternate. The residue at position 293 (K293) is an N6-succinyllysine.

It belongs to the enoyl-CoA hydratase/isomerase family.

It is found in the cytoplasm. The protein localises to the cytosol. It catalyses the reaction (2S)-ethylmalonyl-CoA + H(+) = butanoyl-CoA + CO2. The enzyme catalyses (S)-methylmalonyl-CoA + H(+) = propanoyl-CoA + CO2. It carries out the reaction (2R)-ethylmalonyl-CoA + H(+) = butanoyl-CoA + CO2. Decarboxylates ethylmalonyl-CoA, a potentially toxic metabolite, to form butyryl-CoA, suggesting it might be involved in metabolite proofreading. Acts preferentially on (S)-ethylmalonyl-CoA but also has some activity on the (R)-isomer. Also has methylmalonyl-CoA decarboxylase activity at lower level. The polypeptide is Ethylmalonyl-CoA decarboxylase (Echdc1) (Rattus norvegicus (Rat)).